Here is a 349-residue protein sequence, read N- to C-terminus: Nicotinate-nucleotide--dimethylbenzimidazole phosphoribosyltransferase (349 aa).

E316 functions as the Proton acceptor in the catalytic mechanism.

The protein belongs to the CobT family.

The enzyme catalyses 5,6-dimethylbenzimidazole + nicotinate beta-D-ribonucleotide = alpha-ribazole 5'-phosphate + nicotinate + H(+). The protein operates within nucleoside biosynthesis; alpha-ribazole biosynthesis; alpha-ribazole from 5,6-dimethylbenzimidazole: step 1/2. In terms of biological role, catalyzes the synthesis of alpha-ribazole-5'-phosphate from nicotinate mononucleotide (NAMN) and 5,6-dimethylbenzimidazole (DMB). This is Nicotinate-nucleotide--dimethylbenzimidazole phosphoribosyltransferase from Photorhabdus laumondii subsp. laumondii (strain DSM 15139 / CIP 105565 / TT01) (Photorhabdus luminescens subsp. laumondii).